A 146-amino-acid chain; its full sequence is Large ribosomal subunit protein uL24z (146 aa).

2 disordered regions span residues M1 to R26 and K121 to D146. The segment covering S9–H18 has biased composition (basic residues). Residues K121–S138 are compositionally biased toward basic and acidic residues.

It belongs to the universal ribosomal protein uL24 family.

The protein is Large ribosomal subunit protein uL24z (RPL26A) of Arabidopsis thaliana (Mouse-ear cress).